A 486-amino-acid polypeptide reads, in one-letter code: N-succinylglutamate 5-semialdehyde dehydrogenase (486 aa).

An NAD(+)-binding site is contributed by 220–225 (GSSRTG). Active-site residues include Glu-243 and Cys-277.

Belongs to the aldehyde dehydrogenase family. AstD subfamily.

The enzyme catalyses N-succinyl-L-glutamate 5-semialdehyde + NAD(+) + H2O = N-succinyl-L-glutamate + NADH + 2 H(+). The protein operates within amino-acid degradation; L-arginine degradation via AST pathway; L-glutamate and succinate from L-arginine: step 4/5. Catalyzes the NAD-dependent reduction of succinylglutamate semialdehyde into succinylglutamate. The sequence is that of N-succinylglutamate 5-semialdehyde dehydrogenase from Shewanella baltica (strain OS185).